An 82-amino-acid polypeptide reads, in one-letter code: Small ribosomal subunit protein uS17 (82 aa).

This sequence belongs to the universal ribosomal protein uS17 family. Part of the 30S ribosomal subunit.

In terms of biological role, one of the primary rRNA binding proteins, it binds specifically to the 5'-end of 16S ribosomal RNA. The protein is Small ribosomal subunit protein uS17 of Afipia carboxidovorans (strain ATCC 49405 / DSM 1227 / KCTC 32145 / OM5) (Oligotropha carboxidovorans).